The following is a 354-amino-acid chain: Uroporphyrinogen decarboxylase (354 aa).

Substrate is bound by residues 27–31, Asp77, Tyr154, Ser209, and His327; that span reads RQAGR.

Belongs to the uroporphyrinogen decarboxylase family. In terms of assembly, homodimer.

Its subcellular location is the cytoplasm. It catalyses the reaction uroporphyrinogen III + 4 H(+) = coproporphyrinogen III + 4 CO2. The protein operates within porphyrin-containing compound metabolism; protoporphyrin-IX biosynthesis; coproporphyrinogen-III from 5-aminolevulinate: step 4/4. Catalyzes the decarboxylation of four acetate groups of uroporphyrinogen-III to yield coproporphyrinogen-III. The polypeptide is Uroporphyrinogen decarboxylase (Shewanella pealeana (strain ATCC 700345 / ANG-SQ1)).